The chain runs to 393 residues: Succinate--CoA ligase [ADP-forming] subunit beta (393 aa).

Positions 9–245 (KMLFAQYGIP…PSQEDKCETY (237 aa)) constitute an ATP-grasp domain. ATP-binding positions include Lys-46, 53–55 (GRG), Glu-99, Ile-102, and Glu-107. Mg(2+)-binding residues include Asn-200 and Asp-214. Residues Asn-265 and 322 to 324 (GIV) contribute to the substrate site.

This sequence belongs to the succinate/malate CoA ligase beta subunit family. In terms of assembly, heterotetramer of two alpha and two beta subunits. It depends on Mg(2+) as a cofactor.

It catalyses the reaction succinate + ATP + CoA = succinyl-CoA + ADP + phosphate. The catalysed reaction is GTP + succinate + CoA = succinyl-CoA + GDP + phosphate. It participates in carbohydrate metabolism; tricarboxylic acid cycle; succinate from succinyl-CoA (ligase route): step 1/1. Succinyl-CoA synthetase functions in the citric acid cycle (TCA), coupling the hydrolysis of succinyl-CoA to the synthesis of either ATP or GTP and thus represents the only step of substrate-level phosphorylation in the TCA. The beta subunit provides nucleotide specificity of the enzyme and binds the substrate succinate, while the binding sites for coenzyme A and phosphate are found in the alpha subunit. The sequence is that of Succinate--CoA ligase [ADP-forming] subunit beta from Baumannia cicadellinicola subsp. Homalodisca coagulata.